A 294-amino-acid polypeptide reads, in one-letter code: Glycine--tRNA ligase alpha subunit (294 aa).

It belongs to the class-II aminoacyl-tRNA synthetase family. As to quaternary structure, tetramer of two alpha and two beta subunits.

It is found in the cytoplasm. It catalyses the reaction tRNA(Gly) + glycine + ATP = glycyl-tRNA(Gly) + AMP + diphosphate. This is Glycine--tRNA ligase alpha subunit from Oleidesulfovibrio alaskensis (strain ATCC BAA-1058 / DSM 17464 / G20) (Desulfovibrio alaskensis).